Here is a 484-residue protein sequence, read N- to C-terminus: Protein nucleotidyltransferase YdiU (484 aa).

8 residues coordinate ATP: glycine 92, glycine 94, arginine 95, lysine 115, aspartate 127, glycine 128, arginine 178, and arginine 185. Residue aspartate 258 is the Proton acceptor of the active site. The Mg(2+) site is built by asparagine 259 and aspartate 268. Aspartate 268 lines the ATP pocket.

It belongs to the SELO family. Requires Mg(2+) as cofactor. The cofactor is Mn(2+).

The catalysed reaction is L-seryl-[protein] + ATP = 3-O-(5'-adenylyl)-L-seryl-[protein] + diphosphate. It catalyses the reaction L-threonyl-[protein] + ATP = 3-O-(5'-adenylyl)-L-threonyl-[protein] + diphosphate. The enzyme catalyses L-tyrosyl-[protein] + ATP = O-(5'-adenylyl)-L-tyrosyl-[protein] + diphosphate. It carries out the reaction L-histidyl-[protein] + UTP = N(tele)-(5'-uridylyl)-L-histidyl-[protein] + diphosphate. The catalysed reaction is L-seryl-[protein] + UTP = O-(5'-uridylyl)-L-seryl-[protein] + diphosphate. It catalyses the reaction L-tyrosyl-[protein] + UTP = O-(5'-uridylyl)-L-tyrosyl-[protein] + diphosphate. In terms of biological role, nucleotidyltransferase involved in the post-translational modification of proteins. It can catalyze the addition of adenosine monophosphate (AMP) or uridine monophosphate (UMP) to a protein, resulting in modifications known as AMPylation and UMPylation. This Mycolicibacterium smegmatis (strain ATCC 700084 / mc(2)155) (Mycobacterium smegmatis) protein is Protein nucleotidyltransferase YdiU.